The chain runs to 472 residues: Uronate isomerase (472 aa).

It belongs to the metallo-dependent hydrolases superfamily. Uronate isomerase family.

It carries out the reaction D-glucuronate = D-fructuronate. The catalysed reaction is aldehydo-D-galacturonate = keto-D-tagaturonate. Its pathway is carbohydrate metabolism; pentose and glucuronate interconversion. This is Uronate isomerase from Oceanobacillus iheyensis (strain DSM 14371 / CIP 107618 / JCM 11309 / KCTC 3954 / HTE831).